The chain runs to 375 residues: N-acetyldiaminopimelate deacetylase (375 aa).

D69 is a catalytic residue. The active-site Proton acceptor is E128.

It belongs to the peptidase M20A family. N-acetyldiaminopimelate deacetylase subfamily.

The enzyme catalyses N-acetyl-(2S,6S)-2,6-diaminopimelate + H2O = (2S,6S)-2,6-diaminopimelate + acetate. It functions in the pathway amino-acid biosynthesis; L-lysine biosynthesis via DAP pathway; LL-2,6-diaminopimelate from (S)-tetrahydrodipicolinate (acetylase route): step 3/3. Its function is as follows. Catalyzes the conversion of N-acetyl-diaminopimelate to diaminopimelate and acetate. This Streptococcus suis (strain 05ZYH33) protein is N-acetyldiaminopimelate deacetylase.